The following is a 235-amino-acid chain: Large ribosomal subunit protein uL1 (235 aa).

Belongs to the universal ribosomal protein uL1 family. Part of the 50S ribosomal subunit.

Binds directly to 23S rRNA. The L1 stalk is quite mobile in the ribosome, and is involved in E site tRNA release. Functionally, protein L1 is also a translational repressor protein, it controls the translation of the L11 operon by binding to its mRNA. The protein is Large ribosomal subunit protein uL1 of Corynebacterium diphtheriae (strain ATCC 700971 / NCTC 13129 / Biotype gravis).